We begin with the raw amino-acid sequence, 60 residues long: Sperm protamine P1 (60 aa).

A disordered region spans residues 1–60; sequence MARYRHSRSRSRSRYRRRRRRRSRYRSRRRRXRRRRRSRRGRRRRGYSRRRYSRRRRRRY.

The protein belongs to the protamine P1 family. In terms of tissue distribution, testis.

The protein resides in the nucleus. It is found in the chromosome. In terms of biological role, protamines substitute for histones in the chromatin of sperm during the haploid phase of spermatogenesis. They compact sperm DNA into a highly condensed, stable and inactive complex. In Petrogale concinna (Nabarlek), this protein is Sperm protamine P1 (PRM1).